The sequence spans 428 residues: Enolase 1 (428 aa).

The disordered stretch occupies residues 38–58 (EVPSGASTGENEAVELRDGGS). Gln163 contacts (2R)-2-phosphoglycerate. Glu205 functions as the Proton donor in the catalytic mechanism. Asp242, Glu286, and Asp313 together coordinate Mg(2+). (2R)-2-phosphoglycerate-binding residues include Lys338, Arg367, Ser368, and Lys389. Lys338 serves as the catalytic Proton acceptor.

Belongs to the enolase family. Mg(2+) is required as a cofactor.

It is found in the cytoplasm. The protein resides in the secreted. Its subcellular location is the cell surface. The enzyme catalyses (2R)-2-phosphoglycerate = phosphoenolpyruvate + H2O. The protein operates within carbohydrate degradation; glycolysis; pyruvate from D-glyceraldehyde 3-phosphate: step 4/5. Functionally, catalyzes the reversible conversion of 2-phosphoglycerate (2-PG) into phosphoenolpyruvate (PEP). It is essential for the degradation of carbohydrates via glycolysis. This is Enolase 1 from Lactobacillus gasseri (strain ATCC 33323 / DSM 20243 / BCRC 14619 / CIP 102991 / JCM 1131 / KCTC 3163 / NCIMB 11718 / NCTC 13722 / AM63).